A 773-amino-acid polypeptide reads, in one-letter code: Cadherin-5 (773 aa).

A signal peptide spans 1–18; sequence MKKLILLFSLFLAPAFSY. Residues 19-40 constitute a propeptide that is removed on maturation; the sequence is KENQKINQNFSSNNTSHKRLKR. 3 N-linked (GlcNAc...) asparagine glycosylation sites follow: asparagine 27, asparagine 31, and asparagine 32. Cadherin domains lie at 39–144, 145–251, 252–366, 367–474, and 474–582; these read KRDW…APIF, VQKI…FPVF, KHPS…PPVF, TKLS…APEL, and LVYP…DFTF. Residues 41–595 lie on the Extracellular side of the membrane; it reads DWIWNRMHIR…RAKQVGVSVQ (555 aa). Ca(2+)-binding residues include glutamate 51, glutamate 52, aspartate 102, and glutamate 104. The N-linked (GlcNAc...) asparagine glycan is linked to asparagine 121. 5 residues coordinate Ca(2+): aspartate 136, isoleucine 137, asparagine 138, aspartate 139, and asparagine 140. Asparagine 150 carries N-linked (GlcNAc...) asparagine glycosylation. Residues aspartate 170, aspartate 172, histidine 179, and aspartate 224 each contribute to the Ca(2+) site. N-linked (GlcNAc...) asparagine glycosylation is found at asparagine 263, asparagine 437, asparagine 519, and asparagine 531. Residues 596–617 form a helical membrane-spanning segment; that stretch reads ALVAIFICIFTIIAVIALLILL. Residues 618-773 are Cytoplasmic-facing; it reads RKRHKKDLSG…GSEPNEDFVY (156 aa).

Post-translationally, N-glycosylated. O-glycosylated.

The protein localises to the cell junction. It is found in the adherens junction. The protein resides in the cell membrane. Its subcellular location is the cytoplasm. Cadherins are calcium-dependent cell adhesion proteins. They preferentially interact with themselves in a homophilic manner in connecting cells; cadherins may thus contribute to the sorting of heterogeneous cell types. This cadherin may play a important role in endothelial cell biology through control of the cohesion and organization of the intercellular junctions. Plays a role in coupling actin fibers to cell junctions in endothelial cells. Associates with CTNND1/p120-catenin to control CADH5 endocytosis. The sequence is that of Cadherin-5 from Gallus gallus (Chicken).